A 342-amino-acid polypeptide reads, in one-letter code: Polyprenyl transferase trt2 (342 aa).

9 consecutive transmembrane segments (helical) span residues 71-91 (VVGVAYTAAIAPVSLPATVLL), 95-115 (IILSLWGFLIRSGGCAWNDLI), 141-161 (AALLTAIIFGCGGLLLLLLPS), 163-183 (CTVEAGIILFFALLYPFGKRF), 187-207 (PQLILVNIAWAIPMAMSSLEV), 216-236 (TLSMCIFIASVIVMIDVVYAC), 261-278 (LAYGFFFSGAISLLLGGV), 282-304 (LGLPFIVFSVGGHIFGFLRFLSV), and 319-339 (AKSSCLLATVFWVLGFFLEYL).

Belongs to the UbiA prenyltransferase family. Mg(2+) is required as a cofactor.

The protein resides in the membrane. The enzyme catalyses 3,5-dimethylorsellinate + (2E,6E)-farnesyl diphosphate = (3R)-3-farnesyl-6-hydroxy-2,3,5-trimethyl-4-oxocyclohexa-1,5-diene-1-carboxylate + diphosphate + H(+). Its pathway is secondary metabolite biosynthesis; terpenoid biosynthesis. Functionally, polyprenyl transferase; part of the gene cluster that mediates the biosynthesis of terretonin, a fungal meroterpenoid that acts as a mycotoxin. The first step of the pathway is the synthesis of 3,5-dimethylorsellinic acid (DMOA) by the polyketide synthase trt4. DMOA is then prenylated into farnesyl-DMOA by the polyprenyl transferase trt2. Methylation by the methyltransferase trt5 then leads to farnesyl-DMOA methyl ester which is further subject to epoxidation by the FAD-dependent monooxygenase trt8 to yield epoxyfarnesyl-DMOA methyl ester. Cyclization of epoxyfarnesyl-DMOA methyl ester by the terpene cyclase trt1 leads to a tetracycle intermediate which is in turn converted to preterretonin. Dehydrogenase trt9 comes next to transform preterretonin to preterrenoid. The FAD-dependent monooxygenase trt3 is then required for the C-hydroxylation at C16 of preterrenoid to yield terrenoid. The cytochrome P450 trt6 catalyzes three successive oxidations to transform terrenoid into an unstable intermediate, which then undergoes the D-ring expansion and unusual rearrangement of the methoxy group to afford the core skeleton of terretonin. Trt14 catalyzes the D-ring expansion of terretonin involving intramolecular methoxy rearrangement as well as the hydrolysis of the expanded D-ring and the methyl ester moiety. Finally, the nonheme iron-dependent dioxygenase trt7 accomplishes the last two oxidation reactions steps to complete the biosynthesis of terretonin. Terretonin C is produced via spontaneous decarboxylation of the terretonin precursor. Another shunt product of the terretonin biosynthesis is dihydrofarnesyl-DMOA, derived from epoxyfarnesyl-DMOA through hydrolysis of the epoxide. This chain is Polyprenyl transferase trt2, found in Aspergillus terreus (strain NIH 2624 / FGSC A1156).